Consider the following 313-residue polypeptide: Ribosomal RNA small subunit methyltransferase H (313 aa).

Residues 35-37 (GGH), aspartate 55, phenylalanine 79, aspartate 100, and glutamine 107 contribute to the S-adenosyl-L-methionine site.

It belongs to the methyltransferase superfamily. RsmH family.

It is found in the cytoplasm. It carries out the reaction cytidine(1402) in 16S rRNA + S-adenosyl-L-methionine = N(4)-methylcytidine(1402) in 16S rRNA + S-adenosyl-L-homocysteine + H(+). Its function is as follows. Specifically methylates the N4 position of cytidine in position 1402 (C1402) of 16S rRNA. The chain is Ribosomal RNA small subunit methyltransferase H from Burkholderia ambifaria (strain ATCC BAA-244 / DSM 16087 / CCUG 44356 / LMG 19182 / AMMD) (Burkholderia cepacia (strain AMMD)).